The primary structure comprises 590 residues: Muscarinic acetylcholine receptor M3 (590 aa).

At 1–67 (MTLHNNSTTS…DPLGGHTVWQ (67 aa)) the chain is on the extracellular side. N-linked (GlcNAc...) asparagine glycosylation is found at asparagine 5, asparagine 6, asparagine 15, asparagine 41, and asparagine 48. The helical transmembrane segment at 68 to 91 (VVFIAFLTGILALVTIIGNILVIV) threads the bilayer. Residues 92 to 104 (SFKVNKQLKTVNN) lie on the Cytoplasmic side of the membrane. The helical transmembrane segment at 105–130 (YFLLSLACADLIIGVISMNLFTTYII) threads the bilayer. Residues 131–142 (MNRWALGNLACD) are Extracellular-facing. Cysteine 141 and cysteine 221 form a disulfide bridge. A helical membrane pass occupies residues 143–164 (LWLAIDYVASNASVMNLLVISF). Residues 165–184 (DRYFSITRPLTYRAKRTTKR) are Cytoplasmic-facing. The helical transmembrane segment at 185–206 (AGVMIGLAWVISFVLWAPAILF) threads the bilayer. The Extracellular portion of the chain corresponds to 207–229 (WQYFVGKRTVPPGECFIQFLSEP). The helical transmembrane segment at 230–252 (TITFGTAIAAFYMPVTIMTILYW) threads the bilayer. At 253–491 (RIYKETEKRT…SLVKEKKAAQ (239 aa)) the chain is on the cytoplasmic side. The Basolateral sorting signal motif lies at 275–281 (AETENFV). The segment at 323 to 357 (SSEQMDQDHSSSDSWNNNDAAASLENSASSDEEDI) is disordered. The span at 334-345 (SDSWNNNDAAAS) shows a compositional bias: low complexity. Position 385 is a phosphoserine (serine 385). The chain crosses the membrane as a helical span at residues 492–514 (TLSAILLAFIITWTPYNIMVLVN). Residues 515–526 (TFCDSCIPKTFW) are Extracellular-facing. Cysteine 517 and cysteine 520 are disulfide-bonded. A helical membrane pass occupies residues 527-546 (NLGYWLCYINSTVNPVCYAL). Residues 547–590 (CNKTFRTTFKMLLLCQCGKKKRRKQQYQQRQSVIFHKRAPEQAL) lie on the Cytoplasmic side of the membrane.

This sequence belongs to the G-protein coupled receptor 1 family. Muscarinic acetylcholine receptor subfamily. CHRM3 sub-subfamily. In terms of assembly, homodimer; the dimers can form tetramers. Interacts with NALCN. Interacts with TMEM147.

It localises to the cell membrane. The protein resides in the postsynaptic cell membrane. It is found in the basolateral cell membrane. The protein localises to the endoplasmic reticulum membrane. The muscarinic acetylcholine receptor mediates various cellular responses, including inhibition of adenylate cyclase, breakdown of phosphoinositides and modulation of potassium channels through the action of G proteins. Primary transducing effect is Pi turnover. The protein is Muscarinic acetylcholine receptor M3 (CHRM3) of Gorilla gorilla gorilla (Western lowland gorilla).